Here is a 584-residue protein sequence, read N- to C-terminus: Cation channel sperm-associated protein 2 (584 aa).

Residues 1–106 (MAHERGHLQL…LWAGWVLDSS (106 aa)) lie on the Cytoplasmic side of the membrane. The chain crosses the membrane as a helical span at residues 107 to 129 (IFSNFIISLIFLNTFVLMVEIEL). Topologically, residues 130-138 (MNSTNTSLW) are extracellular. A helical transmembrane segment spans residues 139 to 164 (PLKLALEVTDWFILLSFIVEILLMWL). The Cytoplasmic segment spans residues 165–173 (ASFFLFWKN). A helical transmembrane segment spans residues 174-198 (AWSVFDFVVTMLSLLPEFVVLIGVS). At 199–201 (ADS) the chain is on the extracellular side. Residues 202–220 (VWLQLLRVSRVLRSLKLFA) traverse the membrane as a helical segment. Topologically, residues 221 to 237 (RFPQIKVILLALVRALK) are cytoplasmic. A helical membrane pass occupies residues 238–260 (SMTFLLMLLLIFFYVFAVAGVYF). Residues 261 to 279 (FKEYSRSTIENLEYNMFFS) lie on the Extracellular side of the membrane. An intramembrane region (helical; Pore-forming) is located at residues 280-292 (DLLNSLVTVFILF). Residues 293–312 (TLDHWYAVLQDVWKVPEASR) are Extracellular-facing. Residues 313–339 (VFSSIYVILWLLLGSIIFRNIIVAMMV) traverse the membrane as a helical segment. Topologically, residues 340–584 (TNFQNIRNEL…VQALMNFEDK (245 aa)) are cytoplasmic. The span at 376–386 (SESLRGTSQGK) shows a compositional bias: polar residues. Disordered stretches follow at residues 376–460 (SESL…KGYT) and 480–510 (AGKA…HDEA). Composition is skewed to acidic residues over residues 390-418 (DITE…EEKS) and 426-443 (EKND…EEKS). 2 stretches are compositionally biased toward basic and acidic residues: residues 444–460 (DVEK…KGYT) and 483–496 (AENE…KEKA).

Belongs to the cation channel sperm-associated (TC 1.A.1.19) family. Component of the CatSper complex or CatSpermasome composed of the core pore-forming members CATSPER1, CATSPER2, CATSPER3 and CATSPER4 as well as auxiliary members CATSPERB, CATSPERG, CATSPERD, CATSPERE, CATSPERZ, C2CD6/CATSPERT, SLCO6C1, TMEM249, TMEM262 and EFCAB9. HSPA1 may be an additional auxiliary complex member. The core complex members CATSPER1, CATSPER2, CATSPER3 and CATSPER4 form a heterotetrameric channel. The auxiliary CATSPERB, CATSPERG, CATSPERD and CATSPERE subunits form a pavilion-like structure over the pore which stabilizes the complex through interactions with CATSPER4, CATSPER3, CATSPER1 and CATSPER2 respectively. SLCO6C1 interacts with CATSPERE and TMEM262/CATSPERH interacts with CATSPERB, further stabilizing the complex. C2CD6/CATSPERT interacts at least with CATSPERD and is required for targeting the CatSper complex in the flagellar membrane. Interacts with Ca(v)3.3/CACNA1I, leading to suppression of T-type calcium channel activity.

It localises to the cell projection. It is found in the cilium. The protein localises to the flagellum membrane. The catalysed reaction is Ca(2+)(in) = Ca(2+)(out). Activated by intracellular alkalinization. In terms of biological role, pore-forming subunit of the CatSper complex, a sperm-specific voltage-gated calcium channel that plays a central role in sperm cell hyperactivation. Controls calcium entry to mediate the hyperactivated motility, a step needed for sperm motility which is essential late in the preparation of sperm for fertilization. In Rattus norvegicus (Rat), this protein is Cation channel sperm-associated protein 2 (Catsper2).